A 2169-amino-acid polypeptide reads, in one-letter code: Protein sidekick-1 (2169 aa).

The signal sequence occupies residues 1-50; it reads MVGRKVDREIIARRNSRRDGMMMKLNFCFFFCRRWWAFLLLQLHMLQALA. Topologically, residues 51–1961 are extracellular; that stretch reads QDDVAPYFKT…TEAPFYEEWW (1911 aa). 5 consecutive Ig-like C2-type domains span residues 56–138, 143–229, 245–333, 338–428, and 432–521; these read PYFK…SEVQ, GNFM…SPLI, PIIV…AFIS, PYFT…LDVT, and PAFI…VMLT. C78 and C121 form a disulfide bridge. N-linked (GlcNAc...) asparagine glycans are attached at residues N93, N223, and N253. 3 disulfide bridges follow: C267–C314, C360–C410, and C453–C505. N-linked (GlcNAc...) asparagine glycosylation is found at N502, N524, and N534. In terms of domain architecture, Ig-like C2-type 6 spans 525–615; that stretch reads RTFIVHPPEN…GNDSRMARLE (91 aa). C547 and C599 form a disulfide bridge. Residues N607, N631, N734, N773, N834, N967, and N977 are each glycosylated (N-linked (GlcNAc...) asparagine). 13 consecutive Fibronectin type-III domains span residues 622 to 718, 723 to 819, 824 to 922, 926 to 1020, 1024 to 1123, 1128 to 1226, 1231 to 1328, 1332 to 1426, 1431 to 1528, 1533 to 1651, 1656 to 1752, 1756 to 1851, and 1854 to 1955; these read SPQN…LPEE, PPKN…TLQG, PPQN…TLED, AVGH…VPPE, APSN…TLQA, APGS…TRES, PPEN…TKDD, PPIR…TEKR, PPQQ…TLQD, PPSS…VGEA, APQN…THQA, APSF…AGPA, and SPGS…TEAP. 2 N-linked (GlcNAc...) asparagine glycosylation sites follow: N1234 and N1285. A disordered region spans residues 1423 to 1443; the sequence is TEKRERPAPPQQLTTPQSDVS. Positions 1433 to 1443 are enriched in polar residues; sequence QQLTTPQSDVS. 5 N-linked (GlcNAc...) asparagine glycosylation sites follow: N1606, N1700, N1719, N1771, and N1845. The chain crosses the membrane as a helical span at residues 1962-1982; it reads FLLVMALSSLILILLVVFALV. Residues 1983 to 2169 are Cytoplasmic-facing; sequence LHGQSKKYKN…TPVTGFSSFV (187 aa). Disordered stretches follow at residues 2028–2050 and 2145–2169; these read TFSK…HYSD and GGVY…SSFV. A compositionally biased stretch (polar residues) spans 2160 to 2169; it reads TPVTGFSSFV. A PDZ-binding motif is present at residues 2163 to 2169; it reads TGFSSFV.

Belongs to the sidekick family. In terms of assembly, homodimer; mediates homophilic interactions to promote cell adhesion. In terms of tissue distribution, expressed by non-overlapping subsets of retinal neurons. SDK1, SDK2, DSCAM and DSCAML1 are expressed in non-overlapping subsets of interneurons and retinal ganglion cells (RGCs) that form synapses in distinct inner plexiform layer (IPL) sublaminae.

It localises to the cell membrane. Its subcellular location is the synapse. Functionally, adhesion molecule that promotes lamina-specific synaptic connections in the retina. Expressed in specific subsets of interneurons and retinal ganglion cells (RGCs) and promotes synaptic connectivity via homophilic interactions. The sequence is that of Protein sidekick-1 from Gallus gallus (Chicken).